The chain runs to 229 residues: Small ribosomal subunit protein uS3 (229 aa).

A KH type-2 domain is found at 18 to 87 (IDEYLAKQYY…NPQITITNVE (70 aa)).

This sequence belongs to the universal ribosomal protein uS3 family. As to quaternary structure, part of the 30S ribosomal subunit.

Binds the lower part of the 30S subunit head. This is Small ribosomal subunit protein uS3 from Saccharolobus solfataricus (strain ATCC 35092 / DSM 1617 / JCM 11322 / P2) (Sulfolobus solfataricus).